We begin with the raw amino-acid sequence, 124 residues long: Putative membrane protein insertion efficiency factor (124 aa).

The tract at residues 1 to 24 is disordered; the sequence is MHDPHGHAHTVRPPGRGRNWPGPW. Residues 12 to 24 are compositionally biased toward low complexity; that stretch reads RPPGRGRNWPGPW.

The protein belongs to the UPF0161 family.

The protein localises to the cell inner membrane. Its function is as follows. Could be involved in insertion of integral membrane proteins into the membrane. This Mesorhizobium japonicum (strain LMG 29417 / CECT 9101 / MAFF 303099) (Mesorhizobium loti (strain MAFF 303099)) protein is Putative membrane protein insertion efficiency factor.